The sequence spans 619 residues: Thiohydroximate-O-sulfate sulfur/sulfate-lyase (nitrile-forming) NSP4 (619 aa).

Jacalin-type lectin domains follow at residues 2-142 (AQKV…YFAP) and 151-292 (AKKL…YISL). Kelch repeat units follow at residues 326–374 (KIYS…VCMV), 379–425 (TLYV…SMAA), 429–478 (NVYV…VVQG), 480–524 (VWVV…ASAA), and 528–583 (HIVI…GWTA). R386 functions as the Proton donor in the catalytic mechanism. A (Z)-N-(sulfonatooxy)alkanimidothioate is bound by residues R386, S419, R441, G470, and V519. R441 (proton donor) is an active-site residue. Fe(2+) contacts are provided by E535, D539, and H543. W581 provides a ligand contact to a (Z)-N-(sulfonatooxy)alkanimidothioate.

The protein belongs to the jacalin lectin family. It depends on Fe(2+) as a cofactor. As to expression, mainly expressed in roots, and, to a lower extent, in seedlings and leaves. Observed in seeds.

It carries out the reaction a (Z)-N-(sulfonatooxy)alkanimidothioate = a nitrile + sulfur + sulfate. It catalyses the reaction (Z)-phenyl-N-(sulfonatooxy)methanimidothioate = phenylacetonitrile + sulfur + sulfate. The enzyme catalyses (Z)-N-(sulfonatooxy)prop-2-enimidothioate = but-3-enenitrile + sulfur + sulfate. In terms of biological role, specifier protein that contributes to constitutive and herbivore-induced simple nitrile formation. Promotes simple nitriles, but not epithionitrile or thiocyanate formation. Converts allylglucosinolate and benzylglucosinolate (glucotropaeolin) to their corresponding simple nitriles in the presence of myrosinase. This chain is Thiohydroximate-O-sulfate sulfur/sulfate-lyase (nitrile-forming) NSP4, found in Arabidopsis thaliana (Mouse-ear cress).